The primary structure comprises 798 residues: Integrin beta-5 (798 aa).

A signal peptide spans Met1–Ala23. Residues Gly24–Asn719 lie on the Extracellular side of the membrane. Residues Ile27–Glu76 enclose the PSI domain. 19 disulfides stabilise this stretch: Cys28–Cys46, Cys36–Cys463, Cys39–Cys64, Cys49–Cys75, Cys202–Cys211, Cys259–Cys300, Cys401–Cys413, Cys433–Cys461, Cys465–Cys484, Cys476–Cys487, Cys489–Cys498, Cys500–Cys530, Cys513–Cys528, Cys522–Cys533, Cys535–Cys548, Cys550–Cys571, Cys555–Cys569, Cys563–Cys574, and Cys576–Cys585. A VWFA domain is found at Tyr136–Ile378. The Mg(2+) site is built by Ser147 and Ser149. Residues Ser149, Asp152, Asp153, and Asp184 each contribute to the Ca(2+) site. The Ca(2+) site is built by Asn242, Asp244, Pro246, and Glu247. Glu247 is a Mg(2+) binding site. An N-linked (GlcNAc...) asparagine glycan is attached at Asn347. Gly362 contacts Ca(2+). Asn460 and Asn479 each carry an N-linked (GlcNAc...) asparagine glycan. I-EGF domains follow at residues Cys465–Glu499, Cys500–Glu549, Cys550–Asn586, and Cys587–Glu626. Residue Asn505 is glycosylated (N-linked (GlcNAc...) asparagine). A glycan (N-linked (GlcNAc...) asparagine) is linked at Asn586. Disulfide bonds link Cys587/Cys610, Cys594/Cys608, Cys602/Cys613, Cys615/Cys625, Cys628/Cys631, Cys635/Cys682, Cys641/Cys661, Cys644/Cys657, and Cys690/Cys714. Residues Asn654 and Asn705 are each glycosylated (N-linked (GlcNAc...) asparagine). The helical transmembrane segment at Ala720–Trp742 threads the bilayer. The Cytoplasmic portion of the chain corresponds to Lys743–Val798. Ser770 is subject to Phosphoserine.

The protein belongs to the integrin beta chain family. In terms of assembly, heterodimer of an alpha and a beta subunit. Beta-5 (ITGB5) associates with alpha-V (ITGAV). Interacts with MYO10. Interacts with DAB2. Integrin ITGAV:ITGB5 interacts with FBLN5 (via N-terminus). ITGAV:ITGB5 interacts with CCN3. Interacts with tensin TNS3; TNS3 also interacts with PEAK1, thus acting as an adapter molecule to bridge the association of PEAK1 with ITGB5.

The protein localises to the cell membrane. Its function is as follows. Integrin alpha-V/beta-5 (ITGAV:ITGB5) is a receptor for fibronectin. It recognizes the sequence R-G-D in its ligand. The polypeptide is Integrin beta-5 (Itgb5) (Mus musculus (Mouse)).